The primary structure comprises 56 residues: Cecropin-A2 (56 aa).

Arginine 55 is modified (arginine amide).

It belongs to the cecropin family.

It localises to the secreted. Functionally, cecropins have lytic and antibacterial activity against several Gram-positive and Gram-negative bacteria. The chain is Cecropin-A2 (CecA2) from Drosophila yakuba (Fruit fly).